The sequence spans 118 residues: Heavy metal-associated isoprenylated plant protein 12 (118 aa).

An HMA domain is found at 1 to 65; the sequence is MQVVVLKLDV…KICHTEFISV (65 aa). A disordered region spans residues 68–87; that stretch reads VKEPEKKKPDDPKKPETKPP. Over residues 69–86 the composition is skewed to basic and acidic residues; it reads KEPEKKKPDDPKKPETKP. Cysteine methyl ester is present on Cys-115. The S-farnesyl cysteine moiety is linked to residue Cys-115. The propeptide at 116 to 118 is removed in mature form; the sequence is VTS.

The protein belongs to the HIPP family.

Its function is as follows. Probable heavy-metal-binding protein. In Arabidopsis thaliana (Mouse-ear cress), this protein is Heavy metal-associated isoprenylated plant protein 12.